The chain runs to 191 residues: Guanylate kinase (191 aa).

The Guanylate kinase-like domain occupies 9-187; that stretch reads GQLIVITGPS…SLIALETAIF (179 aa). An ATP-binding site is contributed by 16 to 23; the sequence is GPSGVGKG.

This sequence belongs to the guanylate kinase family.

It is found in the cytoplasm. The catalysed reaction is GMP + ATP = GDP + ADP. In terms of biological role, essential for recycling GMP and indirectly, cGMP. This is Guanylate kinase from Thermosynechococcus vestitus (strain NIES-2133 / IAM M-273 / BP-1).